The sequence spans 302 residues: Porphobilinogen deaminase (302 aa).

An S-(dipyrrolylmethanemethyl)cysteine modification is found at Cys-234.

It belongs to the HMBS family. Monomer. It depends on dipyrromethane as a cofactor.

It carries out the reaction 4 porphobilinogen + H2O = hydroxymethylbilane + 4 NH4(+). Its pathway is porphyrin-containing compound metabolism; protoporphyrin-IX biosynthesis; coproporphyrinogen-III from 5-aminolevulinate: step 2/4. Its function is as follows. Tetrapolymerization of the monopyrrole PBG into the hydroxymethylbilane pre-uroporphyrinogen in several discrete steps. The sequence is that of Porphobilinogen deaminase from Corynebacterium glutamicum (strain R).